We begin with the raw amino-acid sequence, 74 residues long: Kappa-scoloptoxin(07)-Ssm2c (74 aa).

The first 19 residues, 1–19, serve as a signal peptide directing secretion; sequence MLVFYAPLFVSIFSNTVMG. Residues 20 to 41 constitute a propeptide that is removed on maturation; that stretch reads ATIDKPIPKPILREAIEKIAVN.

Belongs to the scoloptoxin-07 family. In terms of processing, contains 3 disulfide bonds. In terms of tissue distribution, expressed by the venom gland.

Its subcellular location is the secreted. Inhibits voltage-gated potassium channels. This chain is Kappa-scoloptoxin(07)-Ssm2c, found in Scolopendra mutilans (Chinese red-headed centipede).